The primary structure comprises 257 residues: Acetylglutamate kinase (257 aa).

Residues 41-42 (GG), Arg63, and Asn158 each bind substrate.

It belongs to the acetylglutamate kinase family. ArgB subfamily.

Its subcellular location is the cytoplasm. The catalysed reaction is N-acetyl-L-glutamate + ATP = N-acetyl-L-glutamyl 5-phosphate + ADP. It functions in the pathway amino-acid biosynthesis; L-arginine biosynthesis; N(2)-acetyl-L-ornithine from L-glutamate: step 2/4. Catalyzes the ATP-dependent phosphorylation of N-acetyl-L-glutamate. The chain is Acetylglutamate kinase from Phocaeicola vulgatus (strain ATCC 8482 / DSM 1447 / JCM 5826 / CCUG 4940 / NBRC 14291 / NCTC 11154) (Bacteroides vulgatus).